The primary structure comprises 64 residues: Translational regulator CsrA 1 (64 aa).

It belongs to the CsrA/RsmA family. Homodimer; the beta-strands of each monomer intercalate to form a hydrophobic core, while the alpha-helices form wings that extend away from the core.

It localises to the cytoplasm. A key translational regulator that binds mRNA to regulate translation initiation and/or mRNA stability. Mediates global changes in gene expression, shifting from rapid growth to stress survival by linking envelope stress, the stringent response and the catabolite repression systems. Usually binds in the 5'-UTR; binding at or near the Shine-Dalgarno sequence prevents ribosome-binding, repressing translation, binding elsewhere in the 5'-UTR can activate translation and/or stabilize the mRNA. Its function is antagonized by small RNA(s). The sequence is that of Translational regulator CsrA 1 from Pseudomonas syringae pv. tomato (strain ATCC BAA-871 / DC3000).